Consider the following 219-residue polypeptide: Large ribosomal subunit protein uL16 (219 aa).

The protein belongs to the universal ribosomal protein uL16 family. Component of the large ribosomal subunit. Mature ribosomes consist of a small (40S) and a large (60S) subunit. The 40S subunit contains about 33 different proteins and 1 molecule of RNA (18S). The 60S subunit contains about 49 different proteins and 3 molecules of RNA (28S, 5.8S and 5S).

The protein is Large ribosomal subunit protein uL16 (RpL10) of Bombyx mandarina (Wild silk moth).